We begin with the raw amino-acid sequence, 248 residues long: ATP synthase subunit a, chloroplastic (248 aa).

Helical transmembrane passes span 38-58 (QVLI…TLAV), 96-116 (VPFI…GALF), 135-155 (INTT…AGFT), 200-220 (LVVA…VMFL), and 221-241 (GLFT…AYIG).

Belongs to the ATPase A chain family. F-type ATPases have 2 components, CF(1) - the catalytic core - and CF(0) - the membrane proton channel. CF(1) has five subunits: alpha(3), beta(3), gamma(1), delta(1), epsilon(1). CF(0) has four main subunits: a, b, b' and c.

It localises to the plastid. The protein resides in the chloroplast thylakoid membrane. In terms of biological role, key component of the proton channel; it plays a direct role in the translocation of protons across the membrane. The protein is ATP synthase subunit a, chloroplastic of Cryptomeria japonica (Japanese cedar).